Consider the following 834-residue polypeptide: Copper-exporting P-type ATPase (834 aa).

2 HMA domains span residues 3–64 (QTID…YDAS) and 99–162 (DSQQ…YGAE). Cu(+) is bound by residues Cys-14, Cys-17, Cys-110, and Cys-113. 6 helical membrane passes run 187-207 (WQAIVALAVGIPVMVWGMIGD), 218-238 (LWLVIGLITLAVMVFAGGHFY), 254-274 (TLVALGTGVAWLYSMSVNLWP), 284-304 (LYYEASAMIIGLINLGHMLEA), 438-458 (AVFVPVVVVIALVSAAIWYFF), and 464-484 (IVYTLVIATTVLIIACPCALG). Asp-523 serves as the catalytic 4-aspartylphosphate intermediate. Positions 720 and 724 each coordinate Mg(2+). The next 2 helical transmembrane spans lie at 779-799 (LGAFIYNSIGIPVAAGILWPF) and 801-821 (GTLLNPVVAGAAMALSSITVV).

Belongs to the cation transport ATPase (P-type) (TC 3.A.3) family. Type IB subfamily.

It is found in the cell inner membrane. Its subcellular location is the cytoplasm. The catalysed reaction is Cu(+)(in) + ATP + H2O = Cu(+)(out) + ADP + phosphate + H(+). Functionally, involved in Cu(+) export. Its function is as follows. Probably also encodes a cytoplasmic copper chaperone CopA(Z) that is produced by programmed ribosomal frameshifting. This Escherichia coli O157:H7 protein is Copper-exporting P-type ATPase (copA).